The following is a 118-amino-acid chain: Large ribosomal subunit protein uL18 (118 aa).

Belongs to the universal ribosomal protein uL18 family. As to quaternary structure, part of the 50S ribosomal subunit; part of the 5S rRNA/L5/L18/L25 subcomplex. Contacts the 5S and 23S rRNAs.

Its function is as follows. This is one of the proteins that bind and probably mediate the attachment of the 5S RNA into the large ribosomal subunit, where it forms part of the central protuberance. The sequence is that of Large ribosomal subunit protein uL18 from Rickettsia typhi (strain ATCC VR-144 / Wilmington).